The chain runs to 313 residues: Probable lysophospholipase L2 (313 aa).

It localises to the cell inner membrane. The catalysed reaction is a 1-acyl-sn-glycero-3-phosphocholine + H2O = sn-glycerol 3-phosphocholine + a fatty acid + H(+). The chain is Probable lysophospholipase L2 (pldB) from Haemophilus influenzae (strain ATCC 51907 / DSM 11121 / KW20 / Rd).